Reading from the N-terminus, the 324-residue chain is Protoheme IX farnesyltransferase 2 (324 aa).

A run of 9 helical transmembrane segments spans residues 39 to 59 (LIKP…MLLA), 63 to 83 (IPSP…AGSA), 115 to 135 (HALV…WATT), 137 to 157 (LLSA…YTLV), 166 to 186 (IVWG…GVTG), 192 to 212 (ALVM…SLAM), 239 to 259 (IVVF…ATGW), 260 to 280 (LYTA…HRLH), and 302 to 322 (LMIV…VLGW).

The protein belongs to the UbiA prenyltransferase family. Protoheme IX farnesyltransferase subfamily.

It localises to the cell membrane. It catalyses the reaction heme b + (2E,6E)-farnesyl diphosphate + H2O = Fe(II)-heme o + diphosphate. Its pathway is porphyrin-containing compound metabolism; heme O biosynthesis; heme O from protoheme: step 1/1. In terms of biological role, converts heme B (protoheme IX) to heme O by substitution of the vinyl group on carbon 2 of heme B porphyrin ring with a hydroxyethyl farnesyl side group. The protein is Protoheme IX farnesyltransferase 2 of Saccharopolyspora erythraea (strain ATCC 11635 / DSM 40517 / JCM 4748 / NBRC 13426 / NCIMB 8594 / NRRL 2338).